The following is a 203-amino-acid chain: V-type ATP synthase subunit D (203 aa).

Belongs to the V-ATPase D subunit family.

Its function is as follows. Produces ATP from ADP in the presence of a proton gradient across the membrane. This Chlamydia trachomatis serovar L2 (strain ATCC VR-902B / DSM 19102 / 434/Bu) protein is V-type ATP synthase subunit D.